The primary structure comprises 98 residues: Integration host factor subunit beta (98 aa).

It belongs to the bacterial histone-like protein family. Heterodimer of an alpha and a beta chain.

This protein is one of the two subunits of integration host factor, a specific DNA-binding protein that functions in genetic recombination as well as in transcriptional and translational control. The sequence is that of Integration host factor subunit beta from Pseudomonas fluorescens (strain SBW25).